A 204-amino-acid chain; its full sequence is FMN-dependent NADH:quinone oxidoreductase 1 (204 aa).

Residues Ser14, 20–22 (SMS), and 99–102 (MYNF) each bind FMN.

This sequence belongs to the azoreductase type 1 family. In terms of assembly, homodimer. Requires FMN as cofactor.

It catalyses the reaction 2 a quinone + NADH + H(+) = 2 a 1,4-benzosemiquinone + NAD(+). The enzyme catalyses N,N-dimethyl-1,4-phenylenediamine + anthranilate + 2 NAD(+) = 2-(4-dimethylaminophenyl)diazenylbenzoate + 2 NADH + 2 H(+). In terms of biological role, quinone reductase that provides resistance to thiol-specific stress caused by electrophilic quinones. Functionally, also exhibits azoreductase activity. Catalyzes the reductive cleavage of the azo bond in aromatic azo compounds to the corresponding amines. The chain is FMN-dependent NADH:quinone oxidoreductase 1 from Hahella chejuensis (strain KCTC 2396).